Consider the following 152-residue polypeptide: Natriuretic peptides A (152 aa).

Residues 1-24 (MGSSAITVSFLLFLAFQLPGQTGA) form the signal peptide. 2 propeptides span residues 25–122 (NPVY…TAPR) and 92–102 (EGGVLGRGPWE). Residues 58-101 (PSQVLSEQNEEAGAPLSPLSEMPPWMGEVNPAQREGGVLGRGPW) form a disordered region. At Ser128 the chain carries Phosphoserine. Cys129 and Cys145 are joined by a disulfide. The segment at 146-150 (NSFRY) is important for degradation of atrial natriuretic peptide by IDE.

Belongs to the natriuretic peptide family. As to quaternary structure, homodimer; disulfide-linked antiparallel dimer. In terms of processing, the precursor molecule is proteolytically cleaved by CORIN at Arg-122 to produce the atrial natriuretic peptide. Undergoes further proteolytic cleavage by unknown proteases to give rise to long-acting natriuretic peptide, vessel dilator and kaliuretic peptide. Additional processing gives rise to the auriculin and atriopeptin peptides. In the kidneys, alternative processing by an unknown protease results in the peptide urodilatin. Post-translationally, cleavage by MME initiates degradation of the factor and thereby regulates its activity. Degradation by IDE results in reduced activation of NPR1 (in vitro). During IDE degradation, the resulting products can temporarily stimulate NPR2 to produce cGMP, before the fragments are completely degraded and inactivated by IDE (in vitro). Degraded by IDE. In terms of processing, phosphorylation on Ser-128 decreases vasorelaxant activity.

It is found in the secreted. Its subcellular location is the perikaryon. The protein localises to the cell projection. In terms of biological role, hormone that plays a key role in mediating cardio-renal homeostasis, and is involved in vascular remodeling and regulating energy metabolism. Acts by specifically binding and stimulating NPR1 to produce cGMP, which in turn activates effector proteins, such as PRKG1, that drive various biological responses. Regulates vasodilation, natriuresis, diuresis and aldosterone synthesis and is therefore essential for regulating blood pressure, controlling the extracellular fluid volume and maintaining the fluid-electrolyte balance. Also involved in inhibiting cardiac remodeling and cardiac hypertrophy by inducing cardiomyocyte apoptosis and attenuating the growth of cardiomyocytes and fibroblasts. Plays a role in female pregnancy by promoting trophoblast invasion and spiral artery remodeling in uterus, and thus prevents pregnancy-induced hypertension. In adipose tissue, acts in various cGMP- and PKG-dependent pathways to regulate lipid metabolism and energy homeostasis. This includes up-regulating lipid metabolism and mitochondrial oxygen utilization by activating the AMP-activated protein kinase (AMPK), and increasing energy expenditure by acting via MAPK11 to promote the UCP1-dependent thermogenesis of brown adipose tissue. Binds the clearance receptor NPR3 which removes the hormone from circulation. May have a role in cardio-renal homeostasis through regulation of natriuresis, diuresis, vasodilation, and inhibiting aldosterone synthesis. In vitro, promotes the production of cGMP and induces vasodilation. May promote natriuresis, at least in part, by enhancing prostaglandin E2 synthesis resulting in the inhibition of renal Na+-K+-ATPase. However reports on the involvement of this peptide in mammal blood volume and blood pressure homeostasis are conflicting; according to a report, in vivo it is not sufficient to activate cGMP and does not inhibit collecting duct transport nor effect diuresis and natriuresis. Appears to bind to specific receptors that are distinct from the receptors bound by atrial natriuretic peptide and vessel dilator. Possibly enhances protein excretion in urine by decreasing proximal tubular protein reabsorption. Its function is as follows. May have a role in cardio-renal homeostasis through regulation of natriuresis, diuresis, and vasodilation. In vitro, promotes the production of cGMP and induces vasodilation. May promote natriuresis, at least in part, by enhancing prostaglandin E2 synthesis resulting in the inhibition of renal Na+-K+-ATPase. However reports on the involvement of this peptide in mammal blood volume and blood pressure homeostasis are conflicting; according to a report it is not sufficient to activate cGMP and does not inhibit collecting duct transport nor effect diuresis and natriuresis. Appears to bind to specific receptors that are distinct from the receptors bound by the atrial natriuretic and long-acting natriuretic peptides. Possibly functions in protein excretion in urine by maintaining the integrity of the proximal tubules and enhancing protein excretion by decreasing proximal tubular protein reabsorption. Functionally, may have a role in cardio-renal homeostasis through regulation of diuresis and inhibiting aldosterone synthesis. In vitro, promotes the production of cGMP and induces vasodilation. May promote natriuresis, at least in part, by enhancing prostaglandin E2 synthesis resulting in the inhibition of renal Na+-K+-ATPase. May have a role in potassium excretion but not sodium excretion (natriuresis). Possibly enhances protein excretion in urine by decreasing proximal tubular protein reabsorption. In terms of biological role, hormone produced in the kidneys that appears to be important for maintaining cardio-renal homeostasis. Mediates vasodilation, natriuresis and diuresis primarily in the renal system, in order to maintain the extracellular fluid volume and control the fluid-electrolyte balance. Specifically binds and stimulates cGMP production by renal transmembrane receptors, likely NPR1. Urodilatin not ANP, may be the natriuretic peptide responsible for the regulation of sodium and water homeostasis in the kidney. May have a role in cardio-renal homeostasis through regulation of natriuresis and vasodilation. In vivo promotes natriuresis and in vitro, vasodilates renal artery strips. Its function is as follows. May have a role in cardio-renal homeostasis through regulation of regulation of natriuresis and vasodilation. In vivo promotes natriuresis. In vitro, vasodilates intestinal smooth muscle but not smooth muscle strips. Functionally, may have a role in cardio-renal homeostasis through regulation of natriuresis and vasodilation. In vivo promotes natriuresis. In vitro, selectively vasodilates intestinal and vascular smooth muscle strips. In terms of biological role, may have a role in cardio-renal homeostasis through regulation of natriuresis and vasodilation. In vivo promotes natriuresis. In vitro, selectively vasodilates intestinal smooth muscle but not vascular smooth muscle strips. This is Natriuretic peptides A (NPPA) from Bos taurus (Bovine).